The primary structure comprises 81 residues: Large ribosomal subunit protein bL31B (81 aa).

The protein belongs to the bacterial ribosomal protein bL31 family. Type B subfamily. As to quaternary structure, part of the 50S ribosomal subunit.

This is Large ribosomal subunit protein bL31B from Pediococcus pentosaceus (strain ATCC 25745 / CCUG 21536 / LMG 10740 / 183-1w).